The chain runs to 580 residues: 2-succinyl-5-enolpyruvyl-6-hydroxy-3-cyclohexene-1-carboxylate synthase (580 aa).

This sequence belongs to the TPP enzyme family. MenD subfamily. In terms of assembly, homodimer. The cofactor is Mg(2+). Requires Mn(2+) as cofactor. Thiamine diphosphate serves as cofactor.

The catalysed reaction is isochorismate + 2-oxoglutarate + H(+) = 5-enolpyruvoyl-6-hydroxy-2-succinyl-cyclohex-3-ene-1-carboxylate + CO2. The protein operates within quinol/quinone metabolism; 1,4-dihydroxy-2-naphthoate biosynthesis; 1,4-dihydroxy-2-naphthoate from chorismate: step 2/7. It participates in quinol/quinone metabolism; menaquinone biosynthesis. Catalyzes the thiamine diphosphate-dependent decarboxylation of 2-oxoglutarate and the subsequent addition of the resulting succinic semialdehyde-thiamine pyrophosphate anion to isochorismate to yield 2-succinyl-5-enolpyruvyl-6-hydroxy-3-cyclohexene-1-carboxylate (SEPHCHC). This is 2-succinyl-5-enolpyruvyl-6-hydroxy-3-cyclohexene-1-carboxylate synthase from Listeria welshimeri serovar 6b (strain ATCC 35897 / DSM 20650 / CCUG 15529 / CIP 8149 / NCTC 11857 / SLCC 5334 / V8).